Consider the following 2103-residue polypeptide: Orsellinic acid synthase (2103 aa).

The segment at 17–232 is N-terminal acylcarrier protein transacylase domain (SAT); that stretch reads DAVHDLNVRS…KRPELAHATI (216 aa). Residues 348-782 form the Ketosynthase family 3 (KS3) domain; it reads ADAIAVVGMS…GGNVSMLLQD (435 aa). Catalysis depends on for beta-ketoacyl synthase activity residues C525, H660, and H702. The segment at 881–1197 is malonyl-CoA:ACP transacylase (MAT) domain; that stretch reads VFTFTGQGAQ…RRGGDDWQSV (317 aa). The active-site For acyl/malonyl transferase activity is the S973. Residues 1272–1409 are N-terminal hotdog fold; that stretch reads HAVEKLQREE…GQPDSAVRRD (138 aa). Residues 1272 to 1582 enclose the PKS/mFAS DH domain; the sequence is HAVEKLQREE…FKKLERDFFA (311 aa). The product template (PT) domain stretch occupies residues 1303-1579; sequence GHVVDESAIC…DICFKKLERD (277 aa). H1304 functions as the Proton acceptor; for dehydratase activity in the catalytic mechanism. The C-terminal hotdog fold stretch occupies residues 1433–1582; sequence VHAMDTALFY…FKKLERDFFA (150 aa). D1493 serves as the catalytic Proton donor; for dehydratase activity. The tract at residues 1592–1638 is disordered; sequence STKPVAAAPAKSMAKRARQLAPSPSPSSSSGSNTPMSRSPTPSSVSD. 2 stretches are compositionally biased toward low complexity: residues 1594–1603 and 1617–1631; these read KPVAAAPAKS and PSSS…SRSP. 2 consecutive Carrier domains span residues 1640–1716 and 1741–1815; these read VDLG…GGSA and PAPS…DDDA. S1676 bears the O-(pantetheine 4'-phosphoryl)serine mark. Positions 1722 to 1743 are disordered; it reads EDITKPTPSPEQTQARKQGPAP. At S1775 the chain carries O-(pantetheine 4'-phosphoryl)serine. A disordered region spans residues 1809–1838; sequence EALDDDAEEESAPAQTSTNPAKETTIDSSR. Positions 1810-1819 are enriched in acidic residues; it reads ALDDDAEEES. A compositionally biased stretch (polar residues) spans 1823-1836; that stretch reads QTSTNPAKETTIDS. The tract at residues 1849-2082 is thioesterase (TE) domain; the sequence is ASYIHLKALP…TVNGDHFSMM (234 aa).

It catalyses the reaction 3 malonyl-CoA + acetyl-CoA + 2 H(+) = orsellinate + 3 CO2 + 4 CoA. It functions in the pathway secondary metabolite biosynthesis. Functionally, non-reducing polyketide synthase; part of the gene cluster that mediates the biosynthesis of orsellinic acid, as well as of the cathepsin K inhibitors F9775 A and F9775 B. The non-reducing polyketide synthase orsA produces orsellinic acid by condensing acetyl-CoA with 3 malonyl-CoA units. Further modifications by the decarboxylase orsB and the tyrosinase-like protein orsC lead to the production of F9775 A and F9775 B. The functions of orsD and orsE remain unclear since only orsB and orsC are required to convert orsellinic acid into F9775 A and F9775 B. This chain is Orsellinic acid synthase, found in Emericella nidulans (strain FGSC A4 / ATCC 38163 / CBS 112.46 / NRRL 194 / M139) (Aspergillus nidulans).